Consider the following 146-residue polypeptide: Anti-sigma F factor (146 aa).

Belongs to the anti-sigma-factor family.

It carries out the reaction L-seryl-[protein] + ATP = O-phospho-L-seryl-[protein] + ADP + H(+). The catalysed reaction is L-threonyl-[protein] + ATP = O-phospho-L-threonyl-[protein] + ADP + H(+). Binds to sigma F and blocks its ability to form an RNA polymerase holoenzyme (E-sigma F). Phosphorylates SpoIIAA on a serine residue. This phosphorylation may enable SpoIIAA to act as an anti-anti-sigma factor that counteracts SpoIIAB and thus releases sigma F from inhibition. In Bacillus velezensis (strain DSM 23117 / BGSC 10A6 / LMG 26770 / FZB42) (Bacillus amyloliquefaciens subsp. plantarum), this protein is Anti-sigma F factor.